Consider the following 339-residue polypeptide: Heat stress transcription factor C-1a (339 aa).

Residues 154-217 (EEEDAAEDVL…LAKLADDPNA (64 aa)) adopt a coiled-coil conformation. Residues 176 to 212 (LRHEQTAIGEELARMSQRLQATERRPDQLMSFLAKLA) are hydrophobic repeat HR-A/B. The tract at residues 227-248 (AERKRRRQHLPSHEPTVCPLPP) is disordered. Residues 229–233 (RKRRR) carry the Nuclear localization signal motif.

It belongs to the HSF family. Class C subfamily. In terms of assembly, homotrimer. Post-translationally, exhibits temperature-dependent phosphorylation.

It is found in the nucleus. In terms of biological role, transcriptional regulator that specifically binds DNA of heat shock promoter elements (HSE). This is Heat stress transcription factor C-1a (HSFC1A) from Oryza sativa subsp. japonica (Rice).